Reading from the N-terminus, the 227-residue chain is MKAVILLSGGLDSSTILYQAKADGCECYSISFDYQQRHRRELHSAFLVAQTAGIVQHQVVNFDLRLWGGSALTDDKIDLPQERSVDAMSQNIPVTYVPARNTIFLSFALAYAEAIAAERVYIGVNALDYSGYPDCRPDYIEAMQEVFRLGTKQGREGQPINIVAPLINLKKTAIIQLGNQLGVPWNLTWSCYNGGDVACGVCDSCRLRLAAFAELGLEDPLPYLKGV.

Leu-7–Leu-17 is a binding site for ATP. The Zn(2+) site is built by Cys-191, Cys-199, Cys-202, and Cys-205.

The protein belongs to the QueC family. Zn(2+) serves as cofactor.

The enzyme catalyses 7-carboxy-7-deazaguanine + NH4(+) + ATP = 7-cyano-7-deazaguanine + ADP + phosphate + H2O + H(+). It functions in the pathway purine metabolism; 7-cyano-7-deazaguanine biosynthesis. Functionally, catalyzes the ATP-dependent conversion of 7-carboxy-7-deazaguanine (CDG) to 7-cyano-7-deazaguanine (preQ(0)). This chain is 7-cyano-7-deazaguanine synthase, found in Trichormus variabilis (strain ATCC 29413 / PCC 7937) (Anabaena variabilis).